We begin with the raw amino-acid sequence, 245 residues long: UDP-N-acetyl-D-mannosaminuronic acid transferase (245 aa).

Belongs to the glycosyltransferase 26 family.

The catalysed reaction is UDP-N-acetyl-alpha-D-mannosaminouronate + N-acetyl-alpha-D-glucosaminyl-di-trans,octa-cis-undecaprenyl diphosphate = beta-D-ManNAcA-(1-&gt;4)-alpha-D-GlcNAc-di-trans,octa-cis-undecaprenyl diphosphate + UDP + H(+). Its pathway is bacterial outer membrane biogenesis; enterobacterial common antigen biosynthesis. Functionally, catalyzes the synthesis of Und-PP-GlcNAc-ManNAcA (Lipid II), the second lipid-linked intermediate involved in enterobacterial common antigen (ECA) synthesis. The polypeptide is UDP-N-acetyl-D-mannosaminuronic acid transferase (Photorhabdus laumondii subsp. laumondii (strain DSM 15139 / CIP 105565 / TT01) (Photorhabdus luminescens subsp. laumondii)).